Consider the following 217-residue polypeptide: Pre-mRNA-splicing factor sap62 (217 aa).

The Matrin-type zinc-finger motif lies at 54–84 (FECRLCLTTHANENSYLTHTQGKKHQTNLAR).

Belongs to the SF3A2 family. As to quaternary structure, belongs to the 40S cdc5-associated complex (or cwf complex), a spliceosome sub-complex reminiscent of a late-stage spliceosome composed of the U2, U5 and U6 snRNAs and at least brr2, cdc5, cwf2/prp3, cwf3/syf1, cwf4/syf3, cwf5/ecm2, spp42/cwf6, cwf7/spf27, cwf8, cwf9, cwf10, cwf11, cwf12, prp45/cwf13, cwf14, cwf15, cwf16, cwf17, cwf18, cwf19, cwf20, cwf21, cwf22, cwf23, cwf24, cwf25, cwf26, cyp7/cwf27, cwf28, cwf29/ist3, lea1, msl1, prp5/cwf1, prp10, prp12/sap130, prp17, prp22, sap61, sap62, sap114, sap145, slu7, smb1, smd1, smd3, smf1, smg1 and syf2.

Its subcellular location is the nucleus. The protein resides in the cytoplasm. Functionally, involved in mRNA splicing where it associates with cdc5 and the other cwf proteins as part of the spliceosome. This Schizosaccharomyces pombe (strain 972 / ATCC 24843) (Fission yeast) protein is Pre-mRNA-splicing factor sap62 (sap62).